Here is a 364-residue protein sequence, read N- to C-terminus: DNA replication and repair protein RecF (364 aa).

Position 30–37 (30–37) interacts with ATP; that stretch reads GDNGAGKT.

It belongs to the RecF family.

Its subcellular location is the cytoplasm. The RecF protein is involved in DNA metabolism; it is required for DNA replication and normal SOS inducibility. RecF binds preferentially to single-stranded, linear DNA. It also seems to bind ATP. The polypeptide is DNA replication and repair protein RecF (Stenotrophomonas maltophilia (strain R551-3)).